Consider the following 78-residue polypeptide: RNA-binding protein Hfq (78 aa).

Residues 10 to 69 (DPFLNALRKEHVPVSIYLVNGIKLQGHIESFDQYVVLLRNTVTQMVYKHAISTVVPARAV) enclose the Sm domain.

Belongs to the Hfq family. As to quaternary structure, homohexamer.

Its function is as follows. RNA chaperone that binds small regulatory RNA (sRNAs) and mRNAs to facilitate mRNA translational regulation in response to envelope stress, environmental stress and changes in metabolite concentrations. Also binds with high specificity to tRNAs. The polypeptide is RNA-binding protein Hfq (Herminiimonas arsenicoxydans).